A 695-amino-acid chain; its full sequence is Glycine--tRNA ligase beta subunit (695 aa).

Belongs to the class-II aminoacyl-tRNA synthetase family. In terms of assembly, tetramer of two alpha and two beta subunits.

Its subcellular location is the cytoplasm. It carries out the reaction tRNA(Gly) + glycine + ATP = glycyl-tRNA(Gly) + AMP + diphosphate. This chain is Glycine--tRNA ligase beta subunit, found in Lawsonia intracellularis (strain PHE/MN1-00).